The primary structure comprises 552 residues: Phosphoglucomutase (552 aa).

The active-site Phosphoserine intermediate is Ser-143. 4 residues coordinate Mg(2+): Ser-143, Asp-295, Asp-297, and Asp-299.

It belongs to the phosphohexose mutase family. It depends on Mg(2+) as a cofactor.

It carries out the reaction alpha-D-glucose 1-phosphate = alpha-D-glucose 6-phosphate. Its pathway is glycolipid metabolism; diglucosyl-diacylglycerol biosynthesis. Catalyzes the interconversion between glucose-6-phosphate and alpha-glucose-1-phosphate. This is the first step in the biosynthesis of diglucosyl-diacylglycerol (Glc2-DAG), i.e. the predominant glycolipid found in the S.aureus membrane, which is also used as a membrane anchor for lipoteichoic acid (LTA). This is Phosphoglucomutase (pgcA) from Staphylococcus aureus (strain Mu50 / ATCC 700699).